We begin with the raw amino-acid sequence, 330 residues long: Ribosomal RNA small subunit methyltransferase C (330 aa).

This sequence belongs to the methyltransferase superfamily. RsmC family. Monomer.

The protein resides in the cytoplasm. The catalysed reaction is guanosine(1207) in 16S rRNA + S-adenosyl-L-methionine = N(2)-methylguanosine(1207) in 16S rRNA + S-adenosyl-L-homocysteine + H(+). Its function is as follows. Specifically methylates the guanine in position 1207 of 16S rRNA in the 30S particle. This Haemophilus influenzae (strain 86-028NP) protein is Ribosomal RNA small subunit methyltransferase C.